The sequence spans 223 residues: Urease accessory protein UreF (223 aa).

The protein belongs to the UreF family. In terms of assembly, ureD, UreF and UreG form a complex that acts as a GTP-hydrolysis-dependent molecular chaperone, activating the urease apoprotein by helping to assemble the nickel containing metallocenter of UreC. The UreE protein probably delivers the nickel.

It is found in the cytoplasm. Functionally, required for maturation of urease via the functional incorporation of the urease nickel metallocenter. This is Urease accessory protein UreF from Paenarthrobacter aurescens (strain TC1).